Reading from the N-terminus, the 515-residue chain is Vacuolar segregation protein PEP7 (515 aa).

A C2H2-type zinc finger spans residues 6–29 (VSCPICLRKFDNLQALNAHLDVEH). Residues 36-58 (DSLGSNDSRLVNGKQKKARSVDS) are disordered. The FYVE-type 1; atypical zinc-finger motif lies at 72-137 (KKGKSCCHTC…CCHDCFVTKP (66 aa)). Zn(2+) is bound by residues C78, C81, C94, C97, C102, H105, C129, C132, C221, C224, C237, C240, C245, C252, C289, and C292. The FYVE-type 2 zinc finger occupies 215-297 (DRSVLFCNIC…LCSHCIDMLF (83 aa)).

In terms of assembly, interacts with VPS21, VPS45, PEP3 and PEP5.

It is found in the vacuole membrane. Its function is as follows. Required for vacuole segregation and vacuole protein sorting. Possibly part of a complex which tethers the vacuole membrane to microtubules, either directly or via kinesin or dynein-like motor proteins. Probably functions in several interorganelle traffic pathways. The protein is Vacuolar segregation protein PEP7 (PEP7) of Saccharomyces cerevisiae (strain ATCC 204508 / S288c) (Baker's yeast).